The chain runs to 339 residues: Serpentine receptor class r-10 (339 aa).

The Extracellular portion of the chain corresponds to 1–11; it reads MSGELWITLVD. The chain crosses the membrane as a helical span at residues 12 to 32; it reads TADIVGVTLTFCVNIVLLGLL. Over 33 to 42 the chain is Cytoplasmic; the sequence is KTRGKNLGTY. The helical transmembrane segment at 43 to 63 threads the bilayer; that stretch reads KYLMAFFSVFSIFYAIIEFIL. Residues 64–92 lie on the Extracellular side of the membrane; the sequence is RPIMHIENTTFFLISRKRFNYSTKLGKIN. 2 N-linked (GlcNAc...) asparagine glycosylation sites follow: asparagine 71 and asparagine 83. A helical membrane pass occupies residues 93–113; sequence SAFYCACFATSFVVSGVHFVY. Residues 114–131 are Cytoplasmic-facing; sequence RYFATCKPNLLRLFNLPT. A helical membrane pass occupies residues 132–152; sequence LLLWPLGCSVPVTMWASVSYF. At 153–201 the chain is on the extracellular side; that stretch reads LYPDTEYTEAAVTNVLNNHYNWIKKENVSYIAYVYYQYENGVRHIYLKN. Asparagine 179 is a glycosylation site (N-linked (GlcNAc...) asparagine). The chain crosses the membrane as a helical span at residues 202 to 222; sequence LLGCFVHYFVMSMTFVVMFYC. The Cytoplasmic segment spans residues 223-254; the sequence is GYATWKTMNEHKDVSDRTRALQKQLFKALVLQ. The chain crosses the membrane as a helical span at residues 255-275; sequence TLIPTIFMYAPTGVMFIAPFF. Residues 276-284 are Extracellular-facing; that stretch reads DVNLNANAN. A helical transmembrane segment spans residues 285–305; that stretch reads FIVFCSFLYPGLDPLILILII. Topologically, residues 306–339 are cytoplasmic; sequence RDFRRTIFNFLCGKKNSVDESRSTTRANLSQVPT.

The protein belongs to the nematode receptor-like protein str family. Interacts with odr-4. In terms of tissue distribution, strongly expressed in the sensory cilia of AWA olfactory neurons, and at low levels in the CEP neurons.

It is found in the cell projection. It localises to the cilium membrane. In terms of biological role, an odorant receptor which affects chemotaxis to the volatile odorant diacetyl. Specifies AWA neuronal cell fate via the odr-7 pathway. This is Serpentine receptor class r-10 from Caenorhabditis elegans.